A 100-amino-acid polypeptide reads, in one-letter code: Large ribosomal subunit protein uL23 (100 aa).

This sequence belongs to the universal ribosomal protein uL23 family. Part of the 50S ribosomal subunit. Contacts protein L29, and trigger factor when it is bound to the ribosome.

Functionally, one of the early assembly proteins it binds 23S rRNA. One of the proteins that surrounds the polypeptide exit tunnel on the outside of the ribosome. Forms the main docking site for trigger factor binding to the ribosome. The polypeptide is Large ribosomal subunit protein uL23 (Synechococcus sp. (strain CC9902)).